The sequence spans 403 residues: D-mannonate dehydratase CC0532 (403 aa).

Substrate-binding residues include asparagine 38 and histidine 123. Tyrosine 160 (proton donor/acceptor) is an active-site residue. Aspartate 211 is a Mg(2+) binding site. Histidine 213 acts as the Proton donor/acceptor in catalysis. Residues glutamate 237 and glutamate 263 each contribute to the Mg(2+) site. 5 residues coordinate substrate: glutamate 263, arginine 284, histidine 313, aspartate 317, and glutamate 340.

This sequence belongs to the mandelate racemase/muconate lactonizing enzyme family. GalD subfamily. It depends on Mg(2+) as a cofactor.

The enzyme catalyses D-mannonate = 2-dehydro-3-deoxy-D-gluconate + H2O. It participates in carbohydrate metabolism; pentose and glucuronate interconversion. Catalyzes the dehydration of D-mannonate. Has no detectable activity with a panel of 70 other acid sugars (in vitro). This Caulobacter vibrioides (strain ATCC 19089 / CIP 103742 / CB 15) (Caulobacter crescentus) protein is D-mannonate dehydratase CC0532.